A 286-amino-acid chain; its full sequence is D-tagatose-1,6-bisphosphate aldolase subunit KbaY (286 aa).

Aspartate 82 serves as the catalytic Proton donor. Zn(2+) is bound by residues histidine 83 and histidine 180. Glycine 181 lines the dihydroxyacetone phosphate pocket. Histidine 208 contributes to the Zn(2+) binding site. Residues 209-211 (GAS) and 230-233 (NVAT) contribute to the dihydroxyacetone phosphate site.

This sequence belongs to the class II fructose-bisphosphate aldolase family. TagBP aldolase KbaY subfamily. In terms of assembly, homotetramer. Forms a complex with KbaZ. It depends on Zn(2+) as a cofactor.

It carries out the reaction D-tagatofuranose 1,6-bisphosphate = D-glyceraldehyde 3-phosphate + dihydroxyacetone phosphate. The protein operates within carbohydrate metabolism; D-tagatose 6-phosphate degradation; D-glyceraldehyde 3-phosphate and glycerone phosphate from D-tagatose 6-phosphate: step 2/2. Its function is as follows. Catalytic subunit of the tagatose-1,6-bisphosphate aldolase KbaYZ, which catalyzes the reversible aldol condensation of dihydroxyacetone phosphate (DHAP or glycerone-phosphate) with glyceraldehyde 3-phosphate (G3P) to produce tagatose 1,6-bisphosphate (TBP). Requires KbaZ subunit for full activity and stability. The sequence is that of D-tagatose-1,6-bisphosphate aldolase subunit KbaY from Escherichia coli O45:K1 (strain S88 / ExPEC).